Consider the following 375-residue polypeptide: F-box/kelch-repeat protein At4g39240 (375 aa).

Residues 1–15 (MPFSAASSSSVSSIA) show a composition bias toward low complexity. The segment at 1–27 (MPFSAASSSSVSSIAEEPPPKKQHDPS) is disordered. Residues 31–77 (SSYLLLLPDEIILNCLARLPKCYYPVISLVSKTFRRLIASPEIYVER) form the F-box domain. 3 Kelch repeats span residues 140–186 (EIYV…FFDG), 187–232 (KLYV…RSFA), and 275–321 (KIYT…GNLA).

In Arabidopsis thaliana (Mouse-ear cress), this protein is F-box/kelch-repeat protein At4g39240.